Here is an 892-residue protein sequence, read N- to C-terminus: Translation initiation factor IF-2 (892 aa).

2 disordered regions span residues 32–102 (LAQA…PGDA) and 114–300 (KAPE…KQAE). Residues 35–48 (AGSSDTKNSPASKA) show a composition bias toward polar residues. The segment covering 139-166 (QEEKKESSEETSPERVEETLIIRTRTEP) has biased composition (basic and acidic residues). The span at 200–211 (AASTEETTQQQP) shows a compositional bias: low complexity. A compositionally biased stretch (polar residues) spans 212-224 (RQNDAASYNNKQQ). The span at 225-238 (PSGTSSRPASSAPS) shows a compositional bias: low complexity. Basic and acidic residues predominate over residues 252 to 276 (RGSERDRSKRSDESVKAFTGRDRYG). Positions 397–566 (IRSPIVAFMG…ALQAEVLELK (170 aa)) constitute a tr-type G domain. Positions 406-413 (GHVDHGKT) are G1. Residue 406–413 (GHVDHGKT) participates in GTP binding. The segment at 431-435 (AITQH) is G2. Positions 452–455 (DTPG) are G3. Residues 452 to 456 (DTPGH) and 506 to 509 (NKCD) contribute to the GTP site. Positions 506-509 (NKCD) are G4. The segment at 542–544 (SAK) is G5.

It belongs to the TRAFAC class translation factor GTPase superfamily. Classic translation factor GTPase family. IF-2 subfamily.

It is found in the cytoplasm. In terms of biological role, one of the essential components for the initiation of protein synthesis. Protects formylmethionyl-tRNA from spontaneous hydrolysis and promotes its binding to the 30S ribosomal subunits. Also involved in the hydrolysis of GTP during the formation of the 70S ribosomal complex. This Chlamydia trachomatis serovar A (strain ATCC VR-571B / DSM 19440 / HAR-13) protein is Translation initiation factor IF-2.